A 561-amino-acid polypeptide reads, in one-letter code: Dihydroxy-acid dehydratase (561 aa).

Asp-80 contacts Mg(2+). Residue Cys-121 coordinates [2Fe-2S] cluster. Residues Asp-122 and Lys-123 each contribute to the Mg(2+) site. Position 123 is an N6-carboxylysine (Lys-123). Cys-194 is a binding site for [2Fe-2S] cluster. Residue Glu-448 coordinates Mg(2+). Residue Ser-474 is the Proton acceptor of the active site.

This sequence belongs to the IlvD/Edd family. As to quaternary structure, homodimer. Requires [2Fe-2S] cluster as cofactor. Mg(2+) is required as a cofactor.

The catalysed reaction is (2R)-2,3-dihydroxy-3-methylbutanoate = 3-methyl-2-oxobutanoate + H2O. It catalyses the reaction (2R,3R)-2,3-dihydroxy-3-methylpentanoate = (S)-3-methyl-2-oxopentanoate + H2O. Its pathway is amino-acid biosynthesis; L-isoleucine biosynthesis; L-isoleucine from 2-oxobutanoate: step 3/4. The protein operates within amino-acid biosynthesis; L-valine biosynthesis; L-valine from pyruvate: step 3/4. Functionally, functions in the biosynthesis of branched-chain amino acids. Catalyzes the dehydration of (2R,3R)-2,3-dihydroxy-3-methylpentanoate (2,3-dihydroxy-3-methylvalerate) into 2-oxo-3-methylpentanoate (2-oxo-3-methylvalerate) and of (2R)-2,3-dihydroxy-3-methylbutanoate (2,3-dihydroxyisovalerate) into 2-oxo-3-methylbutanoate (2-oxoisovalerate), the penultimate precursor to L-isoleucine and L-valine, respectively. The sequence is that of Dihydroxy-acid dehydratase from Anaeromyxobacter sp. (strain Fw109-5).